The sequence spans 401 residues: 4-hydroxy-3-methylbut-2-enyl diphosphate reductase (401 aa).

Cys-66 provides a ligand contact to [4Fe-4S] cluster. Residue His-96 participates in (2E)-4-hydroxy-3-methylbut-2-enyl diphosphate binding. Dimethylallyl diphosphate is bound at residue His-96. Residue His-96 coordinates isopentenyl diphosphate. Cys-157 is a [4Fe-4S] cluster binding site. His-185 contributes to the (2E)-4-hydroxy-3-methylbut-2-enyl diphosphate binding site. His-185 lines the dimethylallyl diphosphate pocket. His-185 is a binding site for isopentenyl diphosphate. Catalysis depends on Glu-187, which acts as the Proton donor. Thr-250 contributes to the (2E)-4-hydroxy-3-methylbut-2-enyl diphosphate binding site. Residue Cys-288 coordinates [4Fe-4S] cluster. (2E)-4-hydroxy-3-methylbut-2-enyl diphosphate contacts are provided by Ser-317, Ser-318, Asn-319, and Ser-381. The dimethylallyl diphosphate site is built by Ser-317, Ser-318, Asn-319, and Ser-381. Positions 317, 318, 319, and 381 each coordinate isopentenyl diphosphate.

This sequence belongs to the IspH family. [4Fe-4S] cluster is required as a cofactor.

The enzyme catalyses isopentenyl diphosphate + 2 oxidized [2Fe-2S]-[ferredoxin] + H2O = (2E)-4-hydroxy-3-methylbut-2-enyl diphosphate + 2 reduced [2Fe-2S]-[ferredoxin] + 2 H(+). The catalysed reaction is dimethylallyl diphosphate + 2 oxidized [2Fe-2S]-[ferredoxin] + H2O = (2E)-4-hydroxy-3-methylbut-2-enyl diphosphate + 2 reduced [2Fe-2S]-[ferredoxin] + 2 H(+). Its pathway is isoprenoid biosynthesis; dimethylallyl diphosphate biosynthesis; dimethylallyl diphosphate from (2E)-4-hydroxy-3-methylbutenyl diphosphate: step 1/1. It participates in isoprenoid biosynthesis; isopentenyl diphosphate biosynthesis via DXP pathway; isopentenyl diphosphate from 1-deoxy-D-xylulose 5-phosphate: step 6/6. Functionally, catalyzes the conversion of 1-hydroxy-2-methyl-2-(E)-butenyl 4-diphosphate (HMBPP) into a mixture of isopentenyl diphosphate (IPP) and dimethylallyl diphosphate (DMAPP). Acts in the terminal step of the DOXP/MEP pathway for isoprenoid precursor biosynthesis. This is 4-hydroxy-3-methylbut-2-enyl diphosphate reductase from Prochlorococcus marinus (strain NATL1A).